The primary structure comprises 161 residues: 2-C-methyl-D-erythritol 2,4-cyclodiphosphate synthase (161 aa).

Asp-11 and His-13 together coordinate a divalent metal cation. 4-CDP-2-C-methyl-D-erythritol 2-phosphate-binding positions include 11–13 (DIH) and 37–38 (HS). His-45 is a binding site for a divalent metal cation. 4-CDP-2-C-methyl-D-erythritol 2-phosphate is bound by residues 59–61 (DIG) and 135–138 (TTNE).

Belongs to the IspF family. In terms of assembly, homotrimer. A divalent metal cation serves as cofactor.

The catalysed reaction is 4-CDP-2-C-methyl-D-erythritol 2-phosphate = 2-C-methyl-D-erythritol 2,4-cyclic diphosphate + CMP. The protein operates within isoprenoid biosynthesis; isopentenyl diphosphate biosynthesis via DXP pathway; isopentenyl diphosphate from 1-deoxy-D-xylulose 5-phosphate: step 4/6. Functionally, involved in the biosynthesis of isopentenyl diphosphate (IPP) and dimethylallyl diphosphate (DMAPP), two major building blocks of isoprenoid compounds. Catalyzes the conversion of 4-diphosphocytidyl-2-C-methyl-D-erythritol 2-phosphate (CDP-ME2P) to 2-C-methyl-D-erythritol 2,4-cyclodiphosphate (ME-CPP) with a corresponding release of cytidine 5-monophosphate (CMP). This Acaryochloris marina (strain MBIC 11017) protein is 2-C-methyl-D-erythritol 2,4-cyclodiphosphate synthase.